The chain runs to 245 residues: 1-(5-phosphoribosyl)-5-[(5-phosphoribosylamino)methylideneamino] imidazole-4-carboxamide isomerase (245 aa).

Asp-7 serves as the catalytic Proton acceptor. Asp-129 acts as the Proton donor in catalysis.

The protein belongs to the HisA/HisF family.

Its subcellular location is the cytoplasm. It catalyses the reaction 1-(5-phospho-beta-D-ribosyl)-5-[(5-phospho-beta-D-ribosylamino)methylideneamino]imidazole-4-carboxamide = 5-[(5-phospho-1-deoxy-D-ribulos-1-ylimino)methylamino]-1-(5-phospho-beta-D-ribosyl)imidazole-4-carboxamide. Its pathway is amino-acid biosynthesis; L-histidine biosynthesis; L-histidine from 5-phospho-alpha-D-ribose 1-diphosphate: step 4/9. This Shewanella halifaxensis (strain HAW-EB4) protein is 1-(5-phosphoribosyl)-5-[(5-phosphoribosylamino)methylideneamino] imidazole-4-carboxamide isomerase.